A 1025-amino-acid chain; its full sequence is MEDQIEQAVDIAIQGVGDPAVRQQALDFCNQVKASDEGWQMCLAMFAGDRKRSDAARYFSLQVIDEALGRLNREQLVYVRDHLFAYVRMGSGLSQGQANVNVGQAVSFADDPVHMKNKLGETLAYLFIMTYTEIWDTFFYDFERLLESPENQFGNPRAADLYLRVLNDIHREIGDTLIIRDPAVQSRNNDLKDLIRNRDMARLADSWKKILMYYKDQQLEPLATEIVNNALRVIGGWVSWAELTLIAEPEALEAIFNLLSSPKSRIHACDCLSEIVAKKMYPNAKFQLIQSLNLTSIIHTLSQSADIEFDERVAKLANSIGSELIHIVETESQEFSANCEALLLDMFPLLLRYLGNEYDDTSSQVLPSVGSYLQLVRRDSKREKAKINPNRLTKNTADQYENFPADRTFISDQRHAVVRSILEAVMKKCRYLDDQEWEEDEDGEFCELRQRLKNLQDMCASIDNQLFLDDVCPVISQALSLPPTADWRDIELGMFELQTLSEAMRSGALSTVKTGQNESPATQAFNNLFFQMVASDAVAQCPQPAVHLLFMEIVVKHSSLFSQHNTNLLNRVLEFFVSPLGIQNSESTKVQMRSWILFHKFCKSVKPQIGQVAQLLVDSIRPLLVIQTEDDTDSDDESAGSAFNAQLNLFELSGILVSILDEASATNGVEQTLQPIFTAVEKAIGVSPPNAESITLVHHNLVAIGTFAHGLDGSSNKLPDGILQLFKNSAEVVNVALDRIPDTKVREAARTVFTRLVPILGSSILSEISTLIQILLQRCSHAELADFLGFLGHLLHSFRNDEGVYNMLKSLLSPLCQRVFASLEELSASADAGNTDDKVLKVEIQRAYLMFIMQILRDRMGGAIVEDKQLADSIIKSVIHYASDPTDIYTCRSAASCLTKMIQLWGNGELEAASAEESVFDQGQKIDGFEQIVLEFSGLCWQVPASSGFNLQDAQSKILVTELGNIQKHIYLKKGDQFLSYLVEQYFPQIGVPDNAAKDYVEKLKTLENKDFKKYFSAFVNELVK.

This sequence belongs to the exportin family.

The protein localises to the nucleus. Its subcellular location is the cytoplasm. In terms of biological role, tRNA nucleus export receptor which facilitates tRNA translocation across the nuclear pore complex. Involved in pre-tRNA splicing, probably by affecting the interaction of pre-tRNA with splicing endonuclease. The polypeptide is Exportin-T (LOS1) (Yarrowia lipolytica (strain CLIB 122 / E 150) (Yeast)).